The following is a 112-amino-acid chain: Small ribosomal subunit protein bS16 (112 aa).

The protein belongs to the bacterial ribosomal protein bS16 family.

The chain is Small ribosomal subunit protein bS16 from Aquifex aeolicus (strain VF5).